The chain runs to 729 residues: Cellulose synthase-like protein E1 (729 aa).

2 helical membrane-spanning segments follow: residues 29–49 (VIAY…IWFY) and 64–84 (LIWF…VVTQ). Catalysis depends on residues Asp152 and Asp443. The next 5 membrane-spanning stretches (helical) occupy residues 526 to 546 (LPVL…IPLF), 553 to 573 (WFIP…AEFL), 644 to 664 (MFLV…AAVA), 680 to 700 (QFVI…GMLL), and 709 to 729 (MSVT…LAFL).

This sequence belongs to the glycosyltransferase 2 family. Plant cellulose synthase-like E subfamily.

Its subcellular location is the golgi apparatus membrane. Functionally, thought to be a Golgi-localized beta-glycan synthase that polymerize the backbones of noncellulosic polysaccharides (hemicelluloses) of plant cell wall. This is Cellulose synthase-like protein E1 (CSLE1) from Arabidopsis thaliana (Mouse-ear cress).